The sequence spans 492 residues: Xaa-Pro dipeptidase (492 aa).

Alanine 2 bears the N-acetylalanine mark. Residue serine 167 is modified to Phosphoserine. Histidine 255 contributes to the a dipeptide binding site. Mn(2+)-binding residues include aspartate 276, aspartate 287, and histidine 370. Aspartate 287 is a binding site for a dipeptide. 2 residues coordinate a dipeptide: histidine 377 and arginine 398. Residues glutamate 412 and glutamate 452 each contribute to the Mn(2+) site.

This sequence belongs to the peptidase M24B family. Eukaryotic-type prolidase subfamily. As to quaternary structure, homodimer. It depends on Mn(2+) as a cofactor.

The enzyme catalyses Xaa-L-Pro dipeptide + H2O = an L-alpha-amino acid + L-proline. Dipeptidase that catalyzes the hydrolysis of dipeptides with a prolyl (Xaa-Pro) or hydroxyprolyl residue in the C-terminal position. The preferred dipeptide substrate is Gly-Pro, but other Xaa-Pro dipeptides, such as Ala-Pro, Met-Pro, Phe-Pro, Val-Pro and Leu-Pro, can be cleaved. Plays an important role in collagen metabolism because the high level of iminoacids in collagen. The protein is Xaa-Pro dipeptidase (Pepd) of Rattus norvegicus (Rat).